Reading from the N-terminus, the 69-residue chain is Large ribosomal subunit protein eL38z/eL38y (69 aa).

The protein belongs to the eukaryotic ribosomal protein eL38 family.

The sequence is that of Large ribosomal subunit protein eL38z/eL38y (RPL38A) from Arabidopsis thaliana (Mouse-ear cress).